A 373-amino-acid chain; its full sequence is Probable G-protein coupled receptor 45 (373 aa).

Over 1-38 (MACNSTPMGTYEHLLLNVSNTLDPGDTPLSAPLRISLA) the chain is Extracellular. Asn-17 carries N-linked (GlcNAc...) asparagine glycosylation. Residues 39 to 59 (IMMLLMIVVGFLGNTVVCIIV) form a helical membrane-spanning segment. Over 60 to 75 (YQRPAMRSAINLLLAT) the chain is Cytoplasmic. A helical membrane pass occupies residues 76 to 96 (LAFSDIMLSLCCMPFTAITLI). The Extracellular portion of the chain corresponds to 97 to 109 (TVRWHFGDHFCRL). The chain crosses the membrane as a helical span at residues 110-130 (SATLYWFFVLEGVAILLIISV). Residues 131–149 (DRFLIIVQRQDKLNPRRAK) lie on the Cytoplasmic side of the membrane. The helical transmembrane segment at 150-170 (MIIAASWVLSFCISAPSFTGW) threads the bilayer. The Extracellular segment spans residues 171–198 (TFMEVPARAPQCVLGYTEFPAERAYVVT). Residues 199–219 (LVVAVFFAPFGVMLCSYLCIL) form a helical membrane-spanning segment. Residues 220-269 (NTVRKNAVRVHNQSDSLDLRQLTGAGLRRLRRQQQQASLDLSFKTKAFTT) lie on the Cytoplasmic side of the membrane. Residues 270–290 (ILILFVGFSLCWLPHSVYSLL) traverse the membrane as a helical segment. The Extracellular portion of the chain corresponds to 291 to 306 (SAFSRRFYYSASFYTT). Residues 307–327 (STCVLWLSYLKSVFNPIVYCW) traverse the membrane as a helical segment. The Cytoplasmic portion of the chain corresponds to 328-373 (RIKKFREACIELLPHTFQILPKVPERIQRKIQPSTIYVCNENQSAV).

Belongs to the G-protein coupled receptor 1 family. As to expression, brain specific.

It is found in the cell membrane. Its function is as follows. Orphan receptor. May play a role in brain function. The polypeptide is Probable G-protein coupled receptor 45 (Gpr45) (Mus musculus (Mouse)).